Reading from the N-terminus, the 283-residue chain is Pantothenate synthetase (283 aa).

Met34–His41 serves as a coordination point for ATP. His41 (proton donor) is an active-site residue. Gln65 serves as a coordination point for (R)-pantoate. Gln65 lines the beta-alanine pocket. Gly152–Asp155 contacts ATP. Gln158 lines the (R)-pantoate pocket. Residues Val181 and Met189–Arg192 contribute to the ATP site.

Belongs to the pantothenate synthetase family. In terms of assembly, homodimer.

The protein resides in the cytoplasm. The catalysed reaction is (R)-pantoate + beta-alanine + ATP = (R)-pantothenate + AMP + diphosphate + H(+). It functions in the pathway cofactor biosynthesis; (R)-pantothenate biosynthesis; (R)-pantothenate from (R)-pantoate and beta-alanine: step 1/1. Catalyzes the condensation of pantoate with beta-alanine in an ATP-dependent reaction via a pantoyl-adenylate intermediate. In Rhodopseudomonas palustris (strain ATCC BAA-98 / CGA009), this protein is Pantothenate synthetase.